The sequence spans 105 residues: BLOC-1-related complex subunit 7 (105 aa).

This sequence belongs to the BORCS7 family. Component of the BLOC-one-related complex (BORC) which is composed of BLOC1S1, BLOC1S2, BORCS5, BORCS6, BORCS7, BORCS8, KXD1 and SNAPIN.

The protein resides in the lysosome membrane. As part of the BORC complex may play a role in lysosomes movement and localization at the cell periphery. Associated with the cytosolic face of lysosomes, the BORC complex may recruit ARL8B and couple lysosomes to microtubule plus-end-directed kinesin motor. This is BLOC-1-related complex subunit 7 from Mus musculus (Mouse).